The following is a 240-amino-acid chain: Octanoyltransferase (240 aa).

The BPL/LPL catalytic domain occupies 49 to 233; it reads GEAPELVWLL…AFESVFGATR (185 aa). Residues 87–94, 162–164, and 175–177 contribute to the substrate site; these read RGGQVTYH, AIG, and GIA. C193 acts as the Acyl-thioester intermediate in catalysis.

It belongs to the LipB family.

The protein resides in the cytoplasm. It catalyses the reaction octanoyl-[ACP] + L-lysyl-[protein] = N(6)-octanoyl-L-lysyl-[protein] + holo-[ACP] + H(+). Its pathway is protein modification; protein lipoylation via endogenous pathway; protein N(6)-(lipoyl)lysine from octanoyl-[acyl-carrier-protein]: step 1/2. Its function is as follows. Catalyzes the transfer of endogenously produced octanoic acid from octanoyl-acyl-carrier-protein onto the lipoyl domains of lipoate-dependent enzymes. Lipoyl-ACP can also act as a substrate although octanoyl-ACP is likely to be the physiological substrate. The polypeptide is Octanoyltransferase (Bradyrhizobium sp. (strain BTAi1 / ATCC BAA-1182)).